Here is a 264-residue protein sequence, read N- to C-terminus: Claudin-18 (264 aa).

Over 1-6 (MATTTC) the chain is Cytoplasmic. A helical membrane pass occupies residues 7-27 (QVVGLLLSLLGLAGCIAATGM). Topologically, residues 28-80 (DMWSTQDLYDNPVTAVFQYEGLWRSCVQQSSGFTECRPYFTILGLPAMLQAVR) are extracellular. The chain crosses the membrane as a helical span at residues 81-101 (ALMIVGIVLGVIGILVSIFAL). Topologically, residues 102–122 (KCIRIGSMDDSAKAKMTLTSG) are cytoplasmic. The chain crosses the membrane as a helical span at residues 123–143 (ILFIISGICAIIGVSVFANML). Residues 144 to 176 (VTNFWMSTANMYSGMGGMGGMVQTVQTRYTFGA) are Extracellular-facing. Residues 177–197 (ALFVGWVAGGLTLIGGVMMCI) traverse the membrane as a helical segment. Over 198-264 (ACRGLTPDDS…QSHPTKYDYV (67 aa)) the chain is Cytoplasmic. The interval 198–264 (ACRGLTPDDS…QSHPTKYDYV (67 aa)) is required for role in regulation of RANKL-induced osteoclast differentiation. The residue at position 217 (Ser217) is a Phosphoserine. Residues 241 to 264 (KKIYDGGARTEDDEQSHPTKYDYV) form a disordered region. Residues 242 to 264 (KIYDGGARTEDDEQSHPTKYDYV) are compositionally biased toward basic and acidic residues.

The protein belongs to the claudin family. Interacts with TJP2/ZO-2. Interacts with TJP1/ZO-1. Interacts with YAP1 (phosphorylated); the interaction sequesters YAP1 away from the nucleus and thereby restricts transcription of YAP1 target genes. As to quaternary structure, interacts with CLDN19. In terms of tissue distribution, expressed in the lung (at protein level). Expressed in lung. Expressed in the stomach. As to expression, expressed in lung. In terms of tissue distribution, expressed in stomach. Expressed in bone. Expressed in stomach.

The protein resides in the cell junction. It localises to the tight junction. Its subcellular location is the cell membrane. The protein localises to the lateral cell membrane. Involved in alveolar fluid homeostasis via regulation of alveolar epithelial tight junction composition and therefore ion transport and solute permeability, potentially via downstream regulation of the actin cytoskeleton organization and beta-2-adrenergic signaling. Required for lung alveolarization and maintenance of the paracellular alveolar epithelial barrier. Acts to maintain epithelial progenitor cell proliferation and organ size, via regulation of YAP1 localization away from the nucleus and thereby restriction of YAP1 target gene transcription. Acts as a negative regulator of RANKL-induced osteoclast differentiation, potentially via relocation of TJP2/ZO-2 away from the nucleus, subsequently involved in bone resorption in response to calcium deficiency. Mediates the osteoprotective effects of estrogen, potentially via acting downstream of estrogen signaling independently of RANKL signaling pathways. Its function is as follows. Involved in the maintenance of homeostasis of the alveolar microenvironment via regulation of pH and subsequent T-cell activation in the alveolar space, is therefore indirectly involved in limiting C.neoformans infection. In terms of biological role, required for the formation of the gastric paracellular barrier via its role in tight junction formation, thereby involved in the response to gastric acidification. In Mus musculus (Mouse), this protein is Claudin-18 (Cldn18).